The following is a 154-amino-acid chain: Urease subunit alpha (154 aa).

In terms of domain architecture, Urease spans 38–154 (GGIDTHIHFI…ADEMDIQVAI (117 aa)). Residues His43, His45, and Lys126 each contribute to the Ni(2+) site. Lys126 bears the N6-carboxylysine mark. A substrate-binding site is contributed by His128.

Belongs to the metallo-dependent hydrolases superfamily. Urease alpha subunit family. As to quaternary structure, heterotrimer of UreA (gamma), UreB (beta) and UreC (alpha) subunits. Three heterotrimers associate to form the active enzyme. The cofactor is Ni cation. Carboxylation allows a single lysine to coordinate two nickel ions.

It is found in the cytoplasm. It catalyses the reaction urea + 2 H2O + H(+) = hydrogencarbonate + 2 NH4(+). It participates in nitrogen metabolism; urea degradation; CO(2) and NH(3) from urea (urease route): step 1/1. This chain is Urease subunit alpha (ureC), found in Photobacterium damselae subsp. damselae (Listonella damsela).